The primary structure comprises 445 residues: Na(+)-translocating NADH-quinone reductase subunit A (445 aa).

The protein belongs to the NqrA family. In terms of assembly, composed of six subunits; NqrA, NqrB, NqrC, NqrD, NqrE and NqrF.

The catalysed reaction is a ubiquinone + n Na(+)(in) + NADH + H(+) = a ubiquinol + n Na(+)(out) + NAD(+). In terms of biological role, NQR complex catalyzes the reduction of ubiquinone-1 to ubiquinol by two successive reactions, coupled with the transport of Na(+) ions from the cytoplasm to the periplasm. NqrA to NqrE are probably involved in the second step, the conversion of ubisemiquinone to ubiquinol. The chain is Na(+)-translocating NADH-quinone reductase subunit A from Pseudomonas aeruginosa (strain ATCC 15692 / DSM 22644 / CIP 104116 / JCM 14847 / LMG 12228 / 1C / PRS 101 / PAO1).